The following is a 372-amino-acid chain: UDP-2-acetamido-2,6-beta-L-arabino-hexul-4-ose reductase (372 aa).

NAD(+)-binding positions include 7–30, leucine 53, tyrosine 103, and lysine 107; that span reads GANGFVGRNLCAHLAERGGIEVVP. Tyrosine 103 serves as the catalytic Proton acceptor. Residues asparagine 132 and 279-282 each bind substrate; that span reads HPGV.

Belongs to the NAD(P)-dependent epimerase/dehydratase family. As to quaternary structure, homodimer.

It catalyses the reaction UDP-2-acetamido-2,6-dideoxy-beta-L-arabino-hex-4-ulose + NADH + H(+) = UDP-2-acetamido-2,6-dideoxy-beta-L-talose + NAD(+). It carries out the reaction UDP-2-acetamido-2,6-dideoxy-beta-L-arabino-hex-4-ulose + NADPH + H(+) = UDP-2-acetamido-2,6-dideoxy-beta-L-talose + NADP(+). It functions in the pathway bacterial outer membrane biogenesis; LPS O-antigen biosynthesis. In terms of biological role, bifunctional enzyme that mediates C-3 epimerization of the second intermediate followed by reduction at C-4 during serogroup O11 O-antigen biosynthesis, thus catalyzing the conversion of UDP-N-acetyl-D-glucosamine to precursors for the biosynthesis of O antigen. The chain is UDP-2-acetamido-2,6-beta-L-arabino-hexul-4-ose reductase from Pseudomonas aeruginosa (strain ATCC 29260 / BCRC 12902 / CIP 102967 / NCIMB 11965 / PA103).